We begin with the raw amino-acid sequence, 307 residues long: UDP-3-O-acyl-N-acetylglucosamine deacetylase (307 aa).

Positions 78, 241, and 245 each coordinate Zn(2+). The active-site Proton donor is H268.

Belongs to the LpxC family. It depends on Zn(2+) as a cofactor.

The catalysed reaction is a UDP-3-O-[(3R)-3-hydroxyacyl]-N-acetyl-alpha-D-glucosamine + H2O = a UDP-3-O-[(3R)-3-hydroxyacyl]-alpha-D-glucosamine + acetate. It participates in glycolipid biosynthesis; lipid IV(A) biosynthesis; lipid IV(A) from (3R)-3-hydroxytetradecanoyl-[acyl-carrier-protein] and UDP-N-acetyl-alpha-D-glucosamine: step 2/6. In terms of biological role, catalyzes the hydrolysis of UDP-3-O-myristoyl-N-acetylglucosamine to form UDP-3-O-myristoylglucosamine and acetate, the committed step in lipid A biosynthesis. This Bordetella avium (strain 197N) protein is UDP-3-O-acyl-N-acetylglucosamine deacetylase.